The primary structure comprises 113 residues: Cell cycle protein GpsB (113 aa).

Positions 32 to 70 (LDSVIKDYENFGKEIERMKNENDRLTDKVDELNKQVSAG) form a coiled coil.

It belongs to the GpsB family. In terms of assembly, forms polymers through the coiled coil domains. Interacts with PBP1, MreC and EzrA.

It localises to the cytoplasm. Divisome component that associates with the complex late in its assembly, after the Z-ring is formed, and is dependent on DivIC and PBP2B for its recruitment to the divisome. Together with EzrA, is a key component of the system that regulates PBP1 localization during cell cycle progression. Its main role could be the removal of PBP1 from the cell pole after pole maturation is completed. Also contributes to the recruitment of PBP1 to the division complex. Not essential for septum formation. This is Cell cycle protein GpsB from Pediococcus pentosaceus (strain ATCC 25745 / CCUG 21536 / LMG 10740 / 183-1w).